A 176-amino-acid polypeptide reads, in one-letter code: Peptidyl-prolyl cis-trans isomerase CYP19-3 (176 aa).

Positions 7-170 (FFDILIGKMK…ERVVIEDCGE (164 aa)) constitute a PPIase cyclophilin-type domain.

Belongs to the cyclophilin-type PPIase family. As to expression, ubiquitous, with highest levels in flowers and lowest levels in roots.

The protein localises to the cytoplasm. The catalysed reaction is [protein]-peptidylproline (omega=180) = [protein]-peptidylproline (omega=0). With respect to regulation, binds cyclosporin A (CsA). CsA mediates some of its effects via an inhibitory action on PPIase. In terms of biological role, PPIases accelerate the folding of proteins. It catalyzes the cis-trans isomerization of proline imidic peptide bonds in oligopeptides. The protein is Peptidyl-prolyl cis-trans isomerase CYP19-3 (CYP19-3) of Arabidopsis thaliana (Mouse-ear cress).